We begin with the raw amino-acid sequence, 406 residues long: CCA-adding enzyme (406 aa).

The ATP site is built by Gly32 and Arg35. CTP contacts are provided by Gly32 and Arg35. Residues Asp45 and Asp47 each coordinate Mg(2+). Residues Arg116, Asp159, Arg162, Arg165, and Arg168 each contribute to the ATP site. Positions 116, 159, 162, 165, and 168 each coordinate CTP.

This sequence belongs to the tRNA nucleotidyltransferase/poly(A) polymerase family. Bacterial CCA-adding enzyme type 3 subfamily. Homodimer. The cofactor is Mg(2+).

It carries out the reaction a tRNA precursor + 2 CTP + ATP = a tRNA with a 3' CCA end + 3 diphosphate. It catalyses the reaction a tRNA with a 3' CCA end + 2 CTP + ATP = a tRNA with a 3' CCACCA end + 3 diphosphate. In terms of biological role, catalyzes the addition and repair of the essential 3'-terminal CCA sequence in tRNAs without using a nucleic acid template. Adds these three nucleotides in the order of C, C, and A to the tRNA nucleotide-73, using CTP and ATP as substrates and producing inorganic pyrophosphate. tRNA 3'-terminal CCA addition is required both for tRNA processing and repair. Also involved in tRNA surveillance by mediating tandem CCA addition to generate a CCACCA at the 3' terminus of unstable tRNAs. While stable tRNAs receive only 3'-terminal CCA, unstable tRNAs are marked with CCACCA and rapidly degraded. The protein is CCA-adding enzyme of Enterococcus faecalis (strain ATCC 700802 / V583).